The following is a 399-amino-acid chain: Tryptophan synthase beta chain (399 aa).

N6-(pyridoxal phosphate)lysine is present on Lys86.

Belongs to the TrpB family. As to quaternary structure, tetramer of two alpha and two beta chains. It depends on pyridoxal 5'-phosphate as a cofactor.

It catalyses the reaction (1S,2R)-1-C-(indol-3-yl)glycerol 3-phosphate + L-serine = D-glyceraldehyde 3-phosphate + L-tryptophan + H2O. Its pathway is amino-acid biosynthesis; L-tryptophan biosynthesis; L-tryptophan from chorismate: step 5/5. The beta subunit is responsible for the synthesis of L-tryptophan from indole and L-serine. This Buchnera aphidicola subsp. Schizaphis graminum (strain Sg) protein is Tryptophan synthase beta chain (trpB).